Reading from the N-terminus, the 228-residue chain is UPF0173 metal-dependent hydrolase BcerKBAB4_4442 (228 aa).

The protein belongs to the UPF0173 family.

This is UPF0173 metal-dependent hydrolase BcerKBAB4_4442 from Bacillus mycoides (strain KBAB4) (Bacillus weihenstephanensis).